The following is a 338-amino-acid chain: MDLKYKLGNDVIRIVTGKNILKDFACELNSGGNISIISRNVYKKYDLSFIKNRIIIDDGERAKSMEYLTLIINELLNKRVERGDSIIYIGGGTTGDLSGFAASIYKRGMGLIAVPTTLLAQVDSSIGGKNGINYMNIKNLIGTFYNPKLIIDDISFIDDKKLMMDGLAESLKMGITIEPELFNIINNDPDYIIENIERIITLSINAKLSIVSKDFHDKKHLRYVLNFGHTIGHALESYFNNNISHGEAVANGMIIEAYISKCLGNADISNEIRSIIKRLGFKIIDFRSVDINRLLEYIKNDKKSESGYINIVAVNGIGRYKIEALSPEEMLKILGGMP.

Residues 58–63, 92–96, 116–117, lysine 129, and lysine 138 each bind NAD(+); these read DGERAK, GTTGD, and TT. The Zn(2+) site is built by glutamate 169, histidine 229, and histidine 245.

Belongs to the sugar phosphate cyclases superfamily. Dehydroquinate synthase family. The cofactor is NAD(+). Co(2+) is required as a cofactor. Requires Zn(2+) as cofactor.

Its subcellular location is the cytoplasm. The catalysed reaction is 7-phospho-2-dehydro-3-deoxy-D-arabino-heptonate = 3-dehydroquinate + phosphate. It participates in metabolic intermediate biosynthesis; chorismate biosynthesis; chorismate from D-erythrose 4-phosphate and phosphoenolpyruvate: step 2/7. In terms of biological role, catalyzes the conversion of 3-deoxy-D-arabino-heptulosonate 7-phosphate (DAHP) to dehydroquinate (DHQ). The protein is 3-dehydroquinate synthase of Picrophilus torridus (strain ATCC 700027 / DSM 9790 / JCM 10055 / NBRC 100828 / KAW 2/3).